A 1342-amino-acid polypeptide reads, in one-letter code: DNA-directed RNA polymerase subunit beta (1342 aa).

It belongs to the RNA polymerase beta chain family. As to quaternary structure, the RNAP catalytic core consists of 2 alpha, 1 beta, 1 beta' and 1 omega subunit. When a sigma factor is associated with the core the holoenzyme is formed, which can initiate transcription.

The enzyme catalyses RNA(n) + a ribonucleoside 5'-triphosphate = RNA(n+1) + diphosphate. Functionally, DNA-dependent RNA polymerase catalyzes the transcription of DNA into RNA using the four ribonucleoside triphosphates as substrates. The polypeptide is DNA-directed RNA polymerase subunit beta (Pectobacterium carotovorum subsp. carotovorum (strain PC1)).